The chain runs to 431 residues: Adenylosuccinate lyase (431 aa).

Residues 4 to 5 (RY), 67 to 69 (RHD), and 93 to 94 (TS) contribute to the N(6)-(1,2-dicarboxyethyl)-AMP site. H141 (proton donor/acceptor) is an active-site residue. Q212 serves as a coordination point for N(6)-(1,2-dicarboxyethyl)-AMP. The active-site Proton donor/acceptor is S262. N(6)-(1,2-dicarboxyethyl)-AMP contacts are provided by residues S263, 268–270 (KRN), and 307–311 (SVERV).

The protein belongs to the lyase 1 family. Adenylosuccinate lyase subfamily. As to quaternary structure, homooligomer. Residues from neighboring subunits contribute catalytic and substrate-binding residues to each active site.

It catalyses the reaction N(6)-(1,2-dicarboxyethyl)-AMP = fumarate + AMP. The enzyme catalyses (2S)-2-[5-amino-1-(5-phospho-beta-D-ribosyl)imidazole-4-carboxamido]succinate = 5-amino-1-(5-phospho-beta-D-ribosyl)imidazole-4-carboxamide + fumarate. Its pathway is purine metabolism; AMP biosynthesis via de novo pathway; AMP from IMP: step 2/2. It participates in purine metabolism; IMP biosynthesis via de novo pathway; 5-amino-1-(5-phospho-D-ribosyl)imidazole-4-carboxamide from 5-amino-1-(5-phospho-D-ribosyl)imidazole-4-carboxylate: step 2/2. In terms of biological role, catalyzes two reactions in de novo purine nucleotide biosynthesis. Catalyzes the breakdown of 5-aminoimidazole- (N-succinylocarboxamide) ribotide (SAICAR or 2-[5-amino-1-(5-phospho-beta-D-ribosyl)imidazole-4-carboxamido]succinate) to 5-aminoimidazole-4-carboxamide ribotide (AICAR or 5-amino-1-(5-phospho-beta-D-ribosyl)imidazole-4-carboxamide) and fumarate, and of adenylosuccinate (ADS or N(6)-(1,2-dicarboxyethyl)-AMP) to adenosine monophosphate (AMP) and fumarate. This Synechocystis sp. (strain ATCC 27184 / PCC 6803 / Kazusa) protein is Adenylosuccinate lyase (purB).